Consider the following 299-residue polypeptide: tRNA dimethylallyltransferase (299 aa).

10–17 is an ATP binding site; the sequence is GATATGKS. 12-17 is a substrate binding site; it reads TATGKS. Positions 35–38 are interaction with substrate tRNA; it reads DSRQ.

Belongs to the IPP transferase family. Monomer. Requires Mg(2+) as cofactor.

The enzyme catalyses adenosine(37) in tRNA + dimethylallyl diphosphate = N(6)-dimethylallyladenosine(37) in tRNA + diphosphate. In terms of biological role, catalyzes the transfer of a dimethylallyl group onto the adenine at position 37 in tRNAs that read codons beginning with uridine, leading to the formation of N6-(dimethylallyl)adenosine (i(6)A). This Rippkaea orientalis (strain PCC 8801 / RF-1) (Cyanothece sp. (strain PCC 8801)) protein is tRNA dimethylallyltransferase.